The chain runs to 356 residues: Phosphate acyltransferase (356 aa).

It belongs to the PlsX family. As to quaternary structure, homodimer. Probably interacts with PlsY.

It is found in the cytoplasm. It catalyses the reaction a fatty acyl-[ACP] + phosphate = an acyl phosphate + holo-[ACP]. It functions in the pathway lipid metabolism; phospholipid metabolism. In terms of biological role, catalyzes the reversible formation of acyl-phosphate (acyl-PO(4)) from acyl-[acyl-carrier-protein] (acyl-ACP). This enzyme utilizes acyl-ACP as fatty acyl donor, but not acyl-CoA. In Escherichia coli (strain 55989 / EAEC), this protein is Phosphate acyltransferase.